The primary structure comprises 209 residues: Protein GrpE (209 aa).

Polar residues predominate over residues 1-13; sequence MSNDSSKAKQNQV. Residues 1-27 are disordered; it reads MSNDSSKAKQNQVDEAVEGEIITDNEN. Positions 15 to 27 are enriched in acidic residues; sequence EAVEGEIITDNEN.

This sequence belongs to the GrpE family. As to quaternary structure, homodimer.

Its subcellular location is the cytoplasm. Functionally, participates actively in the response to hyperosmotic and heat shock by preventing the aggregation of stress-denatured proteins, in association with DnaK and GrpE. It is the nucleotide exchange factor for DnaK and may function as a thermosensor. Unfolded proteins bind initially to DnaJ; upon interaction with the DnaJ-bound protein, DnaK hydrolyzes its bound ATP, resulting in the formation of a stable complex. GrpE releases ADP from DnaK; ATP binding to DnaK triggers the release of the substrate protein, thus completing the reaction cycle. Several rounds of ATP-dependent interactions between DnaJ, DnaK and GrpE are required for fully efficient folding. The chain is Protein GrpE from Shewanella sediminis (strain HAW-EB3).